Reading from the N-terminus, the 901-residue chain is Valine--tRNA ligase (901 aa).

Residues 1-37 (MLPGCYTHRLNMSDTQDPPQDESTTDESADALDGEYD) form a disordered region. Residues 19–35 (PQDESTTDESADALDGE) show a composition bias toward acidic residues. Positions 72–82 (PTVSGNLHMGH) match the 'HIGH' region motif. The 'KMSKS' region motif lies at 572-576 (AMSKS). ATP is bound at residue K575.

Belongs to the class-I aminoacyl-tRNA synthetase family. ValS type 2 subfamily.

It is found in the cytoplasm. The catalysed reaction is tRNA(Val) + L-valine + ATP = L-valyl-tRNA(Val) + AMP + diphosphate. In terms of biological role, catalyzes the attachment of valine to tRNA(Val). As ValRS can inadvertently accommodate and process structurally similar amino acids such as threonine, to avoid such errors, it has a 'posttransfer' editing activity that hydrolyzes mischarged Thr-tRNA(Val) in a tRNA-dependent manner. This Haloarcula marismortui (strain ATCC 43049 / DSM 3752 / JCM 8966 / VKM B-1809) (Halobacterium marismortui) protein is Valine--tRNA ligase.